The primary structure comprises 113 residues: Protein ZEO1 (113 aa).

The span at 1–16 (MSEIQNKAETAAQDVQ) shows a compositional bias: polar residues. The segment at 1 to 96 (MSEIQNKAET…AVSEKKETKK (96 aa)) is disordered. N-acetylserine is present on Ser2. Ser2 carries the phosphoserine modification. Positions 2–97 (SEIQNKAETA…VSEKKETKKE (96 aa)) form a coiled coil. The segment covering 17-37 (QKLEETKESLQNKGQEVKEQA) has biased composition (basic and acidic residues). Glycyl lysine isopeptide (Lys-Gly) (interchain with G-Cter in ubiquitin) cross-links involve residues Lys18 and Lys23. Ser25 carries the phosphoserine modification. Glycyl lysine isopeptide (Lys-Gly) (interchain with G-Cter in ubiquitin) cross-links involve residues Lys29 and Lys34. The residue at position 40 (Ser40) is a Phosphoserine. A Glycyl lysine isopeptide (Lys-Gly) (interchain with G-Cter in ubiquitin) cross-link involves residue Lys45. Thr49 is modified (phosphothreonine). A compositionally biased stretch (basic and acidic residues) spans 53–82 (EQVKKEEQNIADGVEQKKTEAANKVEETKK). Residues Lys57 and Lys82 each participate in a glycyl lysine isopeptide (Lys-Gly) (interchain with G-Cter in ubiquitin) cross-link.

As to quaternary structure, interacts with MID2. In terms of processing, phosphorylation of Ser-25 is induced 2-fold in response to mating pheromone.

The protein localises to the cell membrane. In terms of biological role, acts antagonistically to MID2 in signaling cell wall stress to the PKC1-MPK1 cell integrity pathway. This chain is Protein ZEO1 (ZEO1), found in Saccharomyces cerevisiae (strain ATCC 204508 / S288c) (Baker's yeast).